A 688-amino-acid polypeptide reads, in one-letter code: MWCIVLFSLLAWVYAEPTMYGEILSPNYPQAYPSEVEKSWDIEVPEGYGIHLYFTHLDIELSENCAYDSVQIISGDTEEGRLCGQRSSNNPHSPIVEEFQVPYNKLQVIFKSDFSNEERFTGFAAYYVATDINECTDFVDVPCSHFCNNFIGGYFCSCPPEYFLHDDMKNCGVNCSGDVFTALIGEIASPNYPKPYPENSRCEYQIRLEKGFQVVVTLRREDFDVEAADSAGNCLDSLVFVAGDRQFGPYCGHGFPGPLNIETKSNALDIIFQTDLTGQKKGWKLRYHGDPMPCPKEDTPNSVWEPAKAKYVFRDVVQITCLDGFEVVEGRVGATSFYSTCQSNGKWSNSKLKCQPVDCGIPESIENGKVEDPESTLFGSVIRYTCEEPYYYMENGGGGEYHCAGNGSWVNEVLGPELPKCVPVCGVPREPFEEKQRIIGGSDADIKNFPWQVFFDNPWAGGALINEYWVLTAAHVVEGNREPTMYVGSTSVQTSRLAKSKMLTPEHVFIHPGWKLLEVPEGRTNFDNDIALVRLKDPVKMGPTVSPICLPGTSSDYNLMDGDLGLISGWGRTEKRDRAVRLKAARLPVAPLRKCKEVKVEKPTADAEAYVFTPNMICAGGEKGMDSCKGDSGGAFAVQDPNDKTKFYAAGLVSWGPQCGTYGLYTRVKNYVDWIMKTMQENSTPRED.

A signal peptide spans 1–15; the sequence is MWCIVLFSLLAWVYA. The CUB 1 domain maps to 16-130; the sequence is EPTMYGEILS…TGFAAYYVAT (115 aa). Ca(2+)-binding residues include glutamate 60, aspartate 68, aspartate 113, aspartate 131, isoleucine 132, and glutamate 134. Cysteine 65 and cysteine 83 are oxidised to a cystine. The EGF-like; calcium-binding domain occupies 131–172; that stretch reads DINECTDFVDVPCSHFCNNFIGGYFCSCPPEYFLHDDMKNCG. 3 cysteine pairs are disulfide-bonded: cysteine 135–cysteine 147, cysteine 143–cysteine 156, and cysteine 158–cysteine 171. The Ca(2+) site is built by asparagine 149, phenylalanine 150, and glycine 153. Asparagine 149 carries the post-translational modification (3R)-3-hydroxyasparagine. The N-linked (GlcNAc...) asparagine glycan is linked to asparagine 174. Residues cysteine 175 and cysteine 202 are joined by a disulfide bond. A CUB 2 domain is found at 175–290; the sequence is CSGDVFTALI…KGWKLRYHGD (116 aa). Positions 226, 236, 275, 278, and 279 each coordinate Ca(2+). Cysteine 234 and cysteine 251 are joined by a disulfide. Sushi domains lie at 292 to 356 and 357 to 423; these read MPCP…KCQP and VDCG…KCVP. 7 cysteine pairs are disulfide-bonded: cysteine 294–cysteine 341, cysteine 321–cysteine 354, cysteine 359–cysteine 403, cysteine 386–cysteine 421, cysteine 425–cysteine 549, cysteine 595–cysteine 618, and cysteine 628–cysteine 659. An N-linked (GlcNAc...) asparagine glycan is attached at asparagine 406. In terms of domain architecture, Peptidase S1 spans 438–680; the sequence is IIGGSDADIK…YVDWIMKTMQ (243 aa). Residues histidine 475 and aspartate 529 each act as charge relay system in the active site. Serine 632 functions as the Charge relay system in the catalytic mechanism.

It belongs to the peptidase S1 family. In terms of assembly, core component of the complement C1 complex, a calcium-dependent complex composed of 1 molecule of the C1Q subcomplex, 2 molecules of C1R and 2 molecules of C1S. The C1Q subcomplex is composed 18 subunits: 3 chains of C1QA, C1QB, and C1QC trimerize to form 6 collagen-like triple helices connected to six globular ligand-recognition modules. Cleaved and activated by C1R to generate Complement C1s subcomponent heavy and light chains. Post-translationally, the iron and 2-oxoglutarate dependent 3-hydroxylation of aspartate and asparagine is (R) stereospecific within EGF domains.

It localises to the secreted. Its subcellular location is the cell surface. The catalysed reaction is Cleavage of Arg-|-Ala bond in complement component C4 to form C4a and C4b, and Lys(or Arg)-|-Lys bond in complement component C2 to form C2a and C2b: the 'classical' pathway C3 convertase.. With respect to regulation, cleaved and activated by C1R. Immunoglobulin-binding promotes autoactivation of C1R, which results in the cleavage of the Arg-Ile bond in the catalytic domain. Inhibited by C1 inhibitor (SERPING1). Its function is as follows. Component of the complement C1 complex, a multiprotein complex that initiates the classical pathway of the complement system, a cascade of proteins that leads to phagocytosis and breakdown of pathogens and signaling that strengthens the adaptive immune system. C1S is activated following association of the C1 complex with immunoglobulins (IgG or IgM) complexed with antigens to form antigen-antibody complexes on the surface of pathogens. C1S is cleaved and activated by C1R to generate C1s subcomponent heavy and light chains. C1s subcomponent light chain then cleaves and activates C2 and C4, the next components of the classical complement pathway. Serine protease component of the complement C1 complex, which catalyzes cleavage and activation of C2 and C4, the next components of the classical complement pathway. Also able to cleave C1 inhibitor (SERPING1) in vitro; additional evidence is however required to confirm this result in vivo. Also cleaves IGFBP5 and thereby inhibits the trophic effects of IGF1. The chain is Complement C1s subcomponent from Homo sapiens (Human).